An 89-amino-acid chain; its full sequence is Small ribosomal subunit protein uS15 (89 aa).

Belongs to the universal ribosomal protein uS15 family. Part of the 30S ribosomal subunit. Forms a bridge to the 50S subunit in the 70S ribosome, contacting the 23S rRNA.

Functionally, one of the primary rRNA binding proteins, it binds directly to 16S rRNA where it helps nucleate assembly of the platform of the 30S subunit by binding and bridging several RNA helices of the 16S rRNA. Its function is as follows. Forms an intersubunit bridge (bridge B4) with the 23S rRNA of the 50S subunit in the ribosome. This chain is Small ribosomal subunit protein uS15, found in Bifidobacterium animalis subsp. lactis (strain AD011).